We begin with the raw amino-acid sequence, 89 residues long: Small ribosomal subunit protein uS15 (89 aa).

This sequence belongs to the universal ribosomal protein uS15 family. Part of the 30S ribosomal subunit. Forms a bridge to the 50S subunit in the 70S ribosome, contacting the 23S rRNA.

Its function is as follows. One of the primary rRNA binding proteins, it binds directly to 16S rRNA where it helps nucleate assembly of the platform of the 30S subunit by binding and bridging several RNA helices of the 16S rRNA. In terms of biological role, forms an intersubunit bridge (bridge B4) with the 23S rRNA of the 50S subunit in the ribosome. The sequence is that of Small ribosomal subunit protein uS15 from Chlamydia pneumoniae (Chlamydophila pneumoniae).